The primary structure comprises 609 residues: DNA mismatch repair protein MutL (609 aa).

Residues Ser-364 to Thr-386 are disordered.

This sequence belongs to the DNA mismatch repair MutL/HexB family.

Functionally, this protein is involved in the repair of mismatches in DNA. It is required for dam-dependent methyl-directed DNA mismatch repair. May act as a 'molecular matchmaker', a protein that promotes the formation of a stable complex between two or more DNA-binding proteins in an ATP-dependent manner without itself being part of a final effector complex. In Rickettsia akari (strain Hartford), this protein is DNA mismatch repair protein MutL.